A 140-amino-acid polypeptide reads, in one-letter code: Large ribosomal subunit protein uL11 (140 aa).

It belongs to the universal ribosomal protein uL11 family. Part of the ribosomal stalk of the 50S ribosomal subunit. Interacts with L10 and the large rRNA to form the base of the stalk. L10 forms an elongated spine to which L12 dimers bind in a sequential fashion forming a multimeric L10(L12)X complex. One or more lysine residues are methylated.

Functionally, forms part of the ribosomal stalk which helps the ribosome interact with GTP-bound translation factors. The polypeptide is Large ribosomal subunit protein uL11 (Staphylococcus aureus (strain bovine RF122 / ET3-1)).